The following is a 207-amino-acid chain: Thymidylate kinase (207 aa).

7 to 14 is an ATP binding site; that stretch reads GCEGSGKS.

The protein belongs to the thymidylate kinase family.

The catalysed reaction is dTMP + ATP = dTDP + ADP. Phosphorylation of dTMP to form dTDP in both de novo and salvage pathways of dTTP synthesis. In Chlamydia caviae (strain ATCC VR-813 / DSM 19441 / 03DC25 / GPIC) (Chlamydophila caviae), this protein is Thymidylate kinase.